The following is a 226-amino-acid chain: ATP synthase F(0) complex subunit a (226 aa).

A run of 6 helical transmembrane segments spans residues 6–26, 68–88, 97–117, 138–158, 164–184, and 193–213; these read FAPF…IMIF, WTLM…LGLL, QLSM…LMGF, IPML…ALAV, ITAG…LSSI, and FTIL…QAYV.

It belongs to the ATPase A chain family. Component of the ATP synthase complex composed at least of ATP5F1A/subunit alpha, ATP5F1B/subunit beta, ATP5MC1/subunit c (homooctomer), MT-ATP6/subunit a, MT-ATP8/subunit 8, ATP5ME/subunit e, ATP5MF/subunit f, ATP5MG/subunit g, ATP5MK/subunit k, ATP5MJ/subunit j, ATP5F1C/subunit gamma, ATP5F1D/subunit delta, ATP5F1E/subunit epsilon, ATP5PF/subunit F6, ATP5PB/subunit b, ATP5PD/subunit d, ATP5PO/subunit OSCP. ATP synthase complex consists of a soluble F(1) head domain (subunits alpha(3) and beta(3)) - the catalytic core - and a membrane F(0) domain - the membrane proton channel (subunits c, a, 8, e, f, g, k and j). These two domains are linked by a central stalk (subunits gamma, delta, and epsilon) rotating inside the F1 region and a stationary peripheral stalk (subunits F6, b, d, and OSCP). Interacts with DNAJC30; interaction is direct.

The protein localises to the mitochondrion inner membrane. The catalysed reaction is H(+)(in) = H(+)(out). In terms of biological role, subunit a, of the mitochondrial membrane ATP synthase complex (F(1)F(0) ATP synthase or Complex V) that produces ATP from ADP in the presence of a proton gradient across the membrane which is generated by electron transport complexes of the respiratory chain. ATP synthase complex consist of a soluble F(1) head domain - the catalytic core - and a membrane F(1) domain - the membrane proton channel. These two domains are linked by a central stalk rotating inside the F(1) region and a stationary peripheral stalk. During catalysis, ATP synthesis in the catalytic domain of F(1) is coupled via a rotary mechanism of the central stalk subunits to proton translocation. With the subunit c (ATP5MC1), forms the proton-conducting channel in the F(0) domain, that contains two crucial half-channels (inlet and outlet) that facilitate proton movement from the mitochondrial intermembrane space (IMS) into the matrix. Protons are taken up via the inlet half-channel and released through the outlet half-channel, following a Grotthuss mechanism. The polypeptide is ATP synthase F(0) complex subunit a (Ornithorhynchus anatinus (Duckbill platypus)).